A 342-amino-acid polypeptide reads, in one-letter code: C-X-C chemokine receptor type 6 (342 aa).

The Extracellular portion of the chain corresponds to 1–32; it reads MAEYDHYEDNGFNSFNDSSQEEHQDFLQFSKV. Asn16 is a glycosylation site (N-linked (GlcNAc...) asparagine). The chain crosses the membrane as a helical span at residues 33-59; that stretch reads FLPCMYLVVFVCGLVGNSLVLVISIFY. Residues 60–68 lie on the Cytoplasmic side of the membrane; it reads HKLQSLTDV. A helical transmembrane segment spans residues 69 to 89; sequence FLVNLPLADLVFVCTLPFWAY. The Extracellular segment spans residues 90–103; that stretch reads AGIHEWIFGQVMCK. A disulfide bridge links Cys102 with Cys180. The helical transmembrane segment at 104 to 125 threads the bilayer; that stretch reads TLLGIYTINFYTSMLILTCITV. The Cytoplasmic portion of the chain corresponds to 126-143; the sequence is DRFIVVVKATKAYNQQAK. The helical transmembrane segment at 144–164 threads the bilayer; that stretch reads KMTWGKVICLLIWVISLLVSL. At 165-187 the chain is on the extracellular side; that stretch reads PQIIYGNVFNLDKLICGYHDEEI. The helical transmembrane segment at 188 to 215 threads the bilayer; sequence STVVLATQMTLGFFLPLLAMIVCYSVII. Residues 216 to 231 lie on the Cytoplasmic side of the membrane; sequence KTLLHAGGFQKHRSLK. Residues 232-259 form a helical membrane-spanning segment; the sequence is IIFLVMAVFLLTQTPFNLVKLIRSTHWE. Over 260–275 the chain is Extracellular; the sequence is YYAMTSFHYTIIVTEA. Residues 276–293 form a helical membrane-spanning segment; the sequence is IAYLRACLNPVLYAFVSL. At 294 to 342 the chain is on the cytoplasmic side; the sequence is KFRKNFWKLVKDIGCLPYLGVSHQWKSSEDNSKTFSASHNVEATSMFQL.

This sequence belongs to the G-protein coupled receptor 1 family.

It is found in the cell membrane. Functionally, receptor for the C-X-C chemokine CXCL16. Used as a coreceptor by SIVs and by strains of HIV-2 and m-tropic HIV-1. The polypeptide is C-X-C chemokine receptor type 6 (CXCR6) (Chlorocebus aethiops (Green monkey)).